The chain runs to 383 residues: Cyclin-D4-2 (383 aa).

Positions 51-62 are enriched in gly residues; sequence AAGGGGGSGGGG. Disordered regions lie at residues 51-70, 313-335, and 354-383; these read AAGG…EDMF, QPKP…PESP, and ATIA…KLSR. The segment covering 323 to 335 has biased composition (low complexity); it reads SASASSSSVPESP.

This sequence belongs to the cyclin family. Cyclin D subfamily.

In Oryza sativa subsp. japonica (Rice), this protein is Cyclin-D4-2 (CYCD4-2).